Reading from the N-terminus, the 355-residue chain is MWKEKVRDNILGEVIDWKALIDSLKKERFTGYIKVESWDETDYVILAEGSVKKIVRHKDNKKTFLDTSNYTPSSESKISVYKSSPLTTAHICKDLNFFEYQTLSLSGYGEEIFHSELNLVNPEKLETFFQKVNLNGYAVIYTYTSIYCNVFLLQGHLVGINGGNTWDSEVPSQKDLWQGKVFLSAYFIEPDEVLLLISLKRGFKEKNELNGNGFFVNGNYVGFVENGNIKKGLLILPEEIVETQEVKGEKFLEVNLIENPERLEISFKDLIPKEEKKIKPDVPLKVREIFLDYIGPVGKILWDKVLQELDISPEEFTHPTFRMFINRLAQEIPEEDLSKEFLNKAWEVLDESTST.

This is an uncharacterized protein from Aquifex aeolicus (strain VF5).